Consider the following 423-residue polypeptide: Glutamate-1-semialdehyde 2,1-aminomutase (423 aa).

N6-(pyridoxal phosphate)lysine is present on Lys259.

Belongs to the class-III pyridoxal-phosphate-dependent aminotransferase family. HemL subfamily. Requires pyridoxal 5'-phosphate as cofactor.

Its subcellular location is the cytoplasm. It catalyses the reaction (S)-4-amino-5-oxopentanoate = 5-aminolevulinate. Its pathway is porphyrin-containing compound metabolism; protoporphyrin-IX biosynthesis; 5-aminolevulinate from L-glutamyl-tRNA(Glu): step 2/2. This Methanobrevibacter smithii (strain ATCC 35061 / DSM 861 / OCM 144 / PS) protein is Glutamate-1-semialdehyde 2,1-aminomutase.